A 338-amino-acid polypeptide reads, in one-letter code: MKVFYDKDCDLSIIQGKKVAIIGYGSQGHAQACNLKDSGVDVTIGLRKGSATVAKAEAHGLKVTDVATAVAAADLVMILTPDEFQGQLYKQEIEPNIKKGATLAFSHGFAIHYNQVVPRADLDVIMIAPKAPGHTVRSEFVKGGGIPDLIAIYQDASGNAKNVALSYASGVGGGRTGIIETTFKDETETDLFGEQAVLCGGTVELVKAGFETLVEAGYAPEMAYFECLHELKLIVDLMYEGGIANMNYSISNNAEYGEYVTGPEVINEESRKAMRNALKRIQDGEYAKMFISEGATNYPSMTAKRRNNAAHGIEIIGEQLRSMMPWISANKIVDKTKN.

The KARI N-terminal Rossmann domain occupies 1 to 181 (MKVFYDKDCD…GGGRTGIIET (181 aa)). Residues 24–27 (YGSQ), Arg47, Ser50, Thr52, and 82–85 (DEFQ) contribute to the NADP(+) site. His107 is a catalytic residue. Gly133 is an NADP(+) binding site. Residues 182–327 (TFKDETETDL…EQLRSMMPWI (146 aa)) form the KARI C-terminal knotted domain. Mg(2+)-binding residues include Asp190, Glu194, Glu226, and Glu230. Substrate is bound at residue Ser251.

This sequence belongs to the ketol-acid reductoisomerase family. Requires Mg(2+) as cofactor.

The catalysed reaction is (2R)-2,3-dihydroxy-3-methylbutanoate + NADP(+) = (2S)-2-acetolactate + NADPH + H(+). It carries out the reaction (2R,3R)-2,3-dihydroxy-3-methylpentanoate + NADP(+) = (S)-2-ethyl-2-hydroxy-3-oxobutanoate + NADPH + H(+). It participates in amino-acid biosynthesis; L-isoleucine biosynthesis; L-isoleucine from 2-oxobutanoate: step 2/4. It functions in the pathway amino-acid biosynthesis; L-valine biosynthesis; L-valine from pyruvate: step 2/4. Its function is as follows. Involved in the biosynthesis of branched-chain amino acids (BCAA). Catalyzes an alkyl-migration followed by a ketol-acid reduction of (S)-2-acetolactate (S2AL) to yield (R)-2,3-dihydroxy-isovalerate. In the isomerase reaction, S2AL is rearranged via a Mg-dependent methyl migration to produce 3-hydroxy-3-methyl-2-ketobutyrate (HMKB). In the reductase reaction, this 2-ketoacid undergoes a metal-dependent reduction by NADPH to yield (R)-2,3-dihydroxy-isovalerate. This chain is Ketol-acid reductoisomerase (NADP(+)), found in Pseudomonas entomophila (strain L48).